The chain runs to 259 residues: Phosphatidylserine decarboxylase proenzyme (259 aa).

Active-site charge relay system; for autoendoproteolytic cleavage activity residues include Asp-86, His-142, and Ser-226. The active-site Schiff-base intermediate with substrate; via pyruvic acid; for decarboxylase activity is Ser-226. A Pyruvic acid (Ser); by autocatalysis modification is found at Ser-226.

Belongs to the phosphatidylserine decarboxylase family. PSD-B subfamily. Prokaryotic type I sub-subfamily. Heterodimer of a large membrane-associated beta subunit and a small pyruvoyl-containing alpha subunit. The cofactor is pyruvate. Is synthesized initially as an inactive proenzyme. Formation of the active enzyme involves a self-maturation process in which the active site pyruvoyl group is generated from an internal serine residue via an autocatalytic post-translational modification. Two non-identical subunits are generated from the proenzyme in this reaction, and the pyruvate is formed at the N-terminus of the alpha chain, which is derived from the carboxyl end of the proenzyme. The autoendoproteolytic cleavage occurs by a canonical serine protease mechanism, in which the side chain hydroxyl group of the serine supplies its oxygen atom to form the C-terminus of the beta chain, while the remainder of the serine residue undergoes an oxidative deamination to produce ammonia and the pyruvoyl prosthetic group on the alpha chain. During this reaction, the Ser that is part of the protease active site of the proenzyme becomes the pyruvoyl prosthetic group, which constitutes an essential element of the active site of the mature decarboxylase.

It is found in the cell membrane. The enzyme catalyses a 1,2-diacyl-sn-glycero-3-phospho-L-serine + H(+) = a 1,2-diacyl-sn-glycero-3-phosphoethanolamine + CO2. It participates in phospholipid metabolism; phosphatidylethanolamine biosynthesis; phosphatidylethanolamine from CDP-diacylglycerol: step 2/2. Functionally, catalyzes the formation of phosphatidylethanolamine (PtdEtn) from phosphatidylserine (PtdSer). In Halalkalibacterium halodurans (strain ATCC BAA-125 / DSM 18197 / FERM 7344 / JCM 9153 / C-125) (Bacillus halodurans), this protein is Phosphatidylserine decarboxylase proenzyme.